The sequence spans 213 residues: NADH dehydrogenase [ubiquinone] iron-sulfur protein 7, mitochondrial (213 aa).

The N-terminal 37 residues, 1-37, are a transit peptide targeting the mitochondrion; that stretch reads MAVLSAPGLRGFRILGLRSSVGPAVQARSVHQSVATD. Residues 30–44 show a composition bias toward polar residues; that stretch reads VHQSVATDGPSSTQP. Positions 30 to 53 are disordered; sequence VHQSVATDGPSSTQPALPKARAVA. [4Fe-4S] cluster is bound by residues Cys-88 and Cys-89. At Arg-111 the chain carries Hydroxyarginine. Residues Cys-153 and Cys-183 each contribute to the [4Fe-4S] cluster site.

The protein belongs to the complex I 20 kDa subunit family. Core subunit of respiratory chain NADH dehydrogenase (Complex I) which is composed of 45 different subunits. This is a component of the iron-sulfur (IP) fragment of the enzyme. It depends on [4Fe-4S] cluster as a cofactor. Post-translationally, hydroxylated ar Arg-111 by NDUFAF5 early in the pathway of assembly of complex I, before the formation of the juncture between peripheral and membrane arms.

It is found in the mitochondrion inner membrane. The enzyme catalyses a ubiquinone + NADH + 5 H(+)(in) = a ubiquinol + NAD(+) + 4 H(+)(out). In terms of biological role, core subunit of the mitochondrial membrane respiratory chain NADH dehydrogenase (Complex I) which catalyzes electron transfer from NADH through the respiratory chain, using ubiquinone as an electron acceptor. Essential for the catalytic activity of complex I. The polypeptide is NADH dehydrogenase [ubiquinone] iron-sulfur protein 7, mitochondrial (NDUFS7) (Pan troglodytes (Chimpanzee)).